A 160-amino-acid chain; its full sequence is Outer membrane protein MT2024.1 (160 aa).

Positions 1–22 (MSWSRVIAYGLLPGLALALTCG) are cleaved as a signal peptide.

The protein resides in the cell outer membrane. This Mycobacterium tuberculosis (strain CDC 1551 / Oshkosh) protein is Outer membrane protein MT2024.1.